The chain runs to 341 residues: uncharacterized protein (341 aa).

The next 3 helical transmembrane spans lie at 6 to 26 (IIAG…TTLW), 63 to 83 (LLLC…WVLI), and 137 to 157 (AQGL…LSAV).

The protein resides in the cell membrane. This is an uncharacterized protein from Bacillus subtilis (strain 168).